Here is a 67-residue protein sequence, read N- to C-terminus: Large ribosomal subunit protein bL32 (67 aa).

Residues 1-19 (MAVPKRKMSRSNTRARRSQ) are compositionally biased toward basic residues. Residues 1–21 (MAVPKRKMSRSNTRARRSQWK) form a disordered region.

The protein belongs to the bacterial ribosomal protein bL32 family.

In Arthrobacter sp. (strain FB24), this protein is Large ribosomal subunit protein bL32.